The chain runs to 274 residues: tRNA-cytidine(32) 2-sulfurtransferase (274 aa).

Positions 40–45 (SGGKDS) match the PP-loop motif motif. 3 residues coordinate [4Fe-4S] cluster: Cys115, Cys118, and Cys206.

The protein belongs to the TtcA family. Homodimer. Requires Mg(2+) as cofactor. The cofactor is [4Fe-4S] cluster.

Its subcellular location is the cytoplasm. It carries out the reaction cytidine(32) in tRNA + S-sulfanyl-L-cysteinyl-[cysteine desulfurase] + AH2 + ATP = 2-thiocytidine(32) in tRNA + L-cysteinyl-[cysteine desulfurase] + A + AMP + diphosphate + H(+). It functions in the pathway tRNA modification. Functionally, catalyzes the ATP-dependent 2-thiolation of cytidine in position 32 of tRNA, to form 2-thiocytidine (s(2)C32). The sulfur atoms are provided by the cysteine/cysteine desulfurase (IscS) system. The protein is tRNA-cytidine(32) 2-sulfurtransferase of Stutzerimonas stutzeri (strain A1501) (Pseudomonas stutzeri).